A 312-amino-acid polypeptide reads, in one-letter code: DDRGK domain-containing protein 1 (312 aa).

At 1–2 (ME) the chain is on the lumenal side. The chain crosses the membrane as a helical span at residues 3 to 23 (LIILVGIAIALLVVIITLYLL). Residues 24-312 (QKKNAAPETK…ISAGGEEASS (289 aa)) are Cytoplasmic-facing. The tract at residues 30-163 (PETKPAAAPQ…KQQEDLEAEV (134 aa)) is disordered. A compositionally biased stretch (low complexity) spans 52 to 85 (RRAQIARNQRNRLRQNAPAAPAGQVAPAAGAPAA). Over residues 90–99 (DHEDEGQVDA) the composition is skewed to acidic residues. Basic and acidic residues predominate over residues 110-163 (LDEKMGAKKRAKMEAKEQKRLQREQELHDREQRKVKEAKEEAERKQQEDLEAEV).

Belongs to the DDRGK1 family. As to quaternary structure, interacts with Atg9; the interaction is transient.

Its subcellular location is the endoplasmic reticulum membrane. Functionally, substrate adapter for ufmylation, the covalent attachment of the ubiquitin-like modifier UFM1 to substrate proteins. Required for ufmylation of Atg9; protects the nervous system during aging, possibly by stabilizing Atg9 and supporting its function. In Drosophila erecta (Fruit fly), this protein is DDRGK domain-containing protein 1.